Here is a 241-residue protein sequence, read N- to C-terminus: Proteasome subunit alpha (241 aa).

The protein belongs to the peptidase T1A family. As to quaternary structure, the 20S proteasome core is composed of 14 alpha and 14 beta subunits that assemble into four stacked heptameric rings, resulting in a barrel-shaped structure. The two inner rings, each composed of seven catalytic beta subunits, are sandwiched by two outer rings, each composed of seven alpha subunits. The catalytic chamber with the active sites is on the inside of the barrel. Has a gated structure, the ends of the cylinder being occluded by the N-termini of the alpha-subunits. Is capped at one or both ends by the proteasome regulatory ATPase, PAN.

Its subcellular location is the cytoplasm. With respect to regulation, the formation of the proteasomal ATPase PAN-20S proteasome complex, via the docking of the C-termini of PAN into the intersubunit pockets in the alpha-rings, triggers opening of the gate for substrate entry. Interconversion between the open-gate and close-gate conformations leads to a dynamic regulation of the 20S proteasome proteolysis activity. Functionally, component of the proteasome core, a large protease complex with broad specificity involved in protein degradation. This is Proteasome subunit alpha from Saccharolobus solfataricus (strain ATCC 35092 / DSM 1617 / JCM 11322 / P2) (Sulfolobus solfataricus).